The chain runs to 123 residues: Small ribosomal subunit protein uS12 (123 aa).

Residue Asp-89 is modified to 3-methylthioaspartic acid.

This sequence belongs to the universal ribosomal protein uS12 family. Part of the 30S ribosomal subunit. Contacts proteins S8 and S17. May interact with IF1 in the 30S initiation complex.

With S4 and S5 plays an important role in translational accuracy. In terms of biological role, interacts with and stabilizes bases of the 16S rRNA that are involved in tRNA selection in the A site and with the mRNA backbone. Located at the interface of the 30S and 50S subunits, it traverses the body of the 30S subunit contacting proteins on the other side and probably holding the rRNA structure together. The combined cluster of proteins S8, S12 and S17 appears to hold together the shoulder and platform of the 30S subunit. In Geotalea uraniireducens (strain Rf4) (Geobacter uraniireducens), this protein is Small ribosomal subunit protein uS12.